Consider the following 374-residue polypeptide: Histidinol-phosphate aminotransferase (374 aa).

The residue at position 215 (Lys-215) is an N6-(pyridoxal phosphate)lysine.

This sequence belongs to the class-II pyridoxal-phosphate-dependent aminotransferase family. Histidinol-phosphate aminotransferase subfamily. In terms of assembly, homodimer. It depends on pyridoxal 5'-phosphate as a cofactor.

The catalysed reaction is L-histidinol phosphate + 2-oxoglutarate = 3-(imidazol-4-yl)-2-oxopropyl phosphate + L-glutamate. The protein operates within amino-acid biosynthesis; L-histidine biosynthesis; L-histidine from 5-phospho-alpha-D-ribose 1-diphosphate: step 7/9. The polypeptide is Histidinol-phosphate aminotransferase (Yersinia enterocolitica serotype O:8 / biotype 1B (strain NCTC 13174 / 8081)).